A 514-amino-acid polypeptide reads, in one-letter code: 2,3-bisphosphoglycerate-independent phosphoglycerate mutase (514 aa).

Residues Asp13 and Ser63 each contribute to the Mn(2+) site. Residue Ser63 is the Phosphoserine intermediate of the active site. Substrate contacts are provided by residues His124, 154 to 155 (RD), Arg186, Arg192, 258 to 261 (RADR), and Lys332. Mn(2+)-binding residues include Asp399, His403, Asp440, His441, and His459.

The protein belongs to the BPG-independent phosphoglycerate mutase family. As to quaternary structure, monomer. It depends on Mn(2+) as a cofactor.

The catalysed reaction is (2R)-2-phosphoglycerate = (2R)-3-phosphoglycerate. Its pathway is carbohydrate degradation; glycolysis; pyruvate from D-glyceraldehyde 3-phosphate: step 3/5. In terms of biological role, catalyzes the interconversion of 2-phosphoglycerate and 3-phosphoglycerate. This chain is 2,3-bisphosphoglycerate-independent phosphoglycerate mutase, found in Legionella pneumophila subsp. pneumophila (strain Philadelphia 1 / ATCC 33152 / DSM 7513).